We begin with the raw amino-acid sequence, 278 residues long: MALKQFNPTSPGRRQLVLVDKSELHKGRPEKSLVEGLTKSGGRGGNGRISVRFRGGGAKRLYRVIDFKRRKFDVPATVERLEYDPNRSAFIALVKYEDGELAYILAPQRLKVGDQVIAAEKADVKPGNAMPLRGMPIGTIIHNVELKPLKGGQIARSAGTYAQLVGRDAGYAQIRLNSGELRMVQDGCMATVGAVSNPDHMNESLGKAGRSRHKGRRPHVRGVAMNPIDHPHGGGEGRTSGGRHPVTPWGKPTKGRKTRKNKATDKFIIRSRHARKAR.

The disordered stretch occupies residues 222–264; the sequence is GVAMNPIDHPHGGGEGRTSGGRHPVTPWGKPTKGRKTRKNKAT.

It belongs to the universal ribosomal protein uL2 family. Part of the 50S ribosomal subunit. Forms a bridge to the 30S subunit in the 70S ribosome.

In terms of biological role, one of the primary rRNA binding proteins. Required for association of the 30S and 50S subunits to form the 70S ribosome, for tRNA binding and peptide bond formation. It has been suggested to have peptidyltransferase activity; this is somewhat controversial. Makes several contacts with the 16S rRNA in the 70S ribosome. The polypeptide is Large ribosomal subunit protein uL2 (Phenylobacterium zucineum (strain HLK1)).